Here is a 377-residue protein sequence, read N- to C-terminus: Putative glutamate--cysteine ligase 2 (377 aa).

It belongs to the glutamate--cysteine ligase type 2 family. YbdK subfamily.

The enzyme catalyses L-cysteine + L-glutamate + ATP = gamma-L-glutamyl-L-cysteine + ADP + phosphate + H(+). In terms of biological role, ATP-dependent carboxylate-amine ligase which exhibits weak glutamate--cysteine ligase activity. The protein is Putative glutamate--cysteine ligase 2 of Pseudomonas aeruginosa (strain ATCC 15692 / DSM 22644 / CIP 104116 / JCM 14847 / LMG 12228 / 1C / PRS 101 / PAO1).